Here is a 367-residue protein sequence, read N- to C-terminus: Palmitoyltransferase ERF2 (367 aa).

Residues 1 to 23 show a composition bias toward polar residues; that stretch reads MRLHSRQASNPHRQYSAAQSLHS. A disordered region spans residues 1 to 32; it reads MRLHSRQASNPHRQYSAAQSLHSSSDDSEHKE. The Cytoplasmic segment spans residues 1-87; sequence MRLHSRQASN…GRLRTVAKTK (87 aa). A helical transmembrane segment spans residues 88–108; the sequence is YLSVLVLVMLIAPIVLFSVFE. Residues 109-121 are Lumenal-facing; the sequence is TGYLWKHVAGAKP. The helical transmembrane segment at 122-142 threads the bilayer; sequence CVVLCYYFWTLCFASFISTGA. Over 143 to 229 the chain is Cytoplasmic; sequence TDPGTLPRNI…NCIGQRNHRY (87 aa). Residues 185–235 enclose the DHHC domain; that stretch reads KYCTTCRIWRPPRASHCAVCDSCILSFDHHCDWLNNCIGQRNHRYFLAFLF. The active-site S-palmitoyl cysteine intermediate is Cys215. A helical transmembrane segment spans residues 230 to 250; it reads FLAFLFSSVLSSIWLLTCCAL. Residues 251–262 are Lumenal-facing; sequence KLRHAGSPSAAP. The helical transmembrane segment at 263-283 threads the bilayer; it reads VSLLLICYCAVSIWYPLLLAI. Residues 284–367 are Cytoplasmic-facing; it reads YHLFLTGTQQ…LPIPHSFEKV (84 aa).

This sequence belongs to the DHHC palmitoyltransferase family. ERF2/ZDHHC9 subfamily. As to quaternary structure, interacts with ERF4. Autopalmitoylated.

Its subcellular location is the endoplasmic reticulum membrane. The catalysed reaction is L-cysteinyl-[protein] + hexadecanoyl-CoA = S-hexadecanoyl-L-cysteinyl-[protein] + CoA. The ERF2-ERF4 complex is a palmitoyltransferase specific for Ras proteins. This Eremothecium gossypii (strain ATCC 10895 / CBS 109.51 / FGSC 9923 / NRRL Y-1056) (Yeast) protein is Palmitoyltransferase ERF2 (ERF2).